The primary structure comprises 1040 residues: Multidrug resistance protein MdtB (1040 aa).

12 consecutive transmembrane segments (helical) span residues 16 to 36 (FIMRPVATTLLMVAILLAGII), 347 to 367 (LMMAIALVVMIIYLFLRNIPA), 369 to 389 (IIPGVAVPLSLIGTFAVMVFL), 396 to 416 (LTLMALTIATGFVVDDAIVVI), 440 to 460 (IGFTIISLTFSLIAVLIPLLF), 472 to 492 (FAITLAVAILISAVVSLTLTP), 537 to 557 (WLTLSVALSTLLLSVLLWVFI), 863 to 883 (LGSTVWLIVAAVVAMYIVLGI), 888 to 908 (FIHPITILSTLPTAGVGALLA), 911 to 931 (IAGSELDVIAIIGIILLIGIV), 968 to 988 (ILMTTLAALLGALPLMLSTGV), and 998 to 1018 (IGMVGGLIVSQVLTLFTTPVI).

The protein belongs to the resistance-nodulation-cell division (RND) (TC 2.A.6) family. MdtB subfamily. Part of a tripartite efflux system composed of MdtA, MdtB and MdtC. MdtB forms a heteromultimer with MdtC.

Its subcellular location is the cell inner membrane. In terms of biological role, the MdtABC tripartite complex confers resistance against novobiocin and deoxycholate. This is Multidrug resistance protein MdtB from Escherichia coli O17:K52:H18 (strain UMN026 / ExPEC).